Here is a 341-residue protein sequence, read N- to C-terminus: Serine/threonine-protein kinase PDIK1L (341 aa).

The Protein kinase domain maps to 8–334 (YDLIREVGRG…LELRLVQIAF (327 aa)). Residues 14 to 22 (VGRGSYGVV) and Lys37 contribute to the ATP site. The Proton acceptor role is filled by Asp164.

The protein belongs to the protein kinase superfamily. Ser/Thr protein kinase family.

Its subcellular location is the nucleus. The catalysed reaction is L-seryl-[protein] + ATP = O-phospho-L-seryl-[protein] + ADP + H(+). It catalyses the reaction L-threonyl-[protein] + ATP = O-phospho-L-threonyl-[protein] + ADP + H(+). The protein is Serine/threonine-protein kinase PDIK1L (Pdik1l) of Mus musculus (Mouse).